The chain runs to 232 residues: Orotidine 5'-phosphate decarboxylase (232 aa).

Residues D11, K33, D60 to T69, T120, R181, Q191, G211, and R212 contribute to the substrate site. K62 functions as the Proton donor in the catalytic mechanism.

Belongs to the OMP decarboxylase family. Type 1 subfamily. In terms of assembly, homodimer.

The enzyme catalyses orotidine 5'-phosphate + H(+) = UMP + CO2. It functions in the pathway pyrimidine metabolism; UMP biosynthesis via de novo pathway; UMP from orotate: step 2/2. In terms of biological role, catalyzes the decarboxylation of orotidine 5'-monophosphate (OMP) to uridine 5'-monophosphate (UMP). This Tolumonas auensis (strain DSM 9187 / NBRC 110442 / TA 4) protein is Orotidine 5'-phosphate decarboxylase.